The sequence spans 757 residues: RNA-directed RNA polymerase catalytic subunit (757 aa).

A disordered region spans residues 52–82; it reads KGKWTTNTETGAPQLNPIDGPLPEDNEPSGY. Residues 55–64 show a composition bias toward polar residues; the sequence is WTTNTETGAP. 2 consecutive short sequence motifs (nuclear localization signal) follow at residues 187-195 and 203-216; these read RKRRVRDNM and RTIG…NKKS. Residues 249–256 form a promoter-binding site region; sequence RGFVYFVE. A RdRp catalytic domain is found at 286 to 483; the sequence is VRKMMTNSQD…GINMSKKKSY (198 aa).

It belongs to the influenza viruses polymerase PB1 family. As to quaternary structure, influenza RNA polymerase is composed of three subunits: PB1, PB2 and PA. Interacts (via N-terminus) with PA (via C-terminus). Interacts (via C-terminus) with PB2 (via N-terminus); this interaction is essential for transcription initiation. Post-translationally, phosphorylated by host PRKCA.

It localises to the host nucleus. Its subcellular location is the host cytoplasm. It catalyses the reaction RNA(n) + a ribonucleoside 5'-triphosphate = RNA(n+1) + diphosphate. Its function is as follows. RNA-dependent RNA polymerase which is responsible for replication and transcription of virus RNA segments. The transcription of viral mRNAs occurs by a unique mechanism called cap-snatching. 5' methylated caps of cellular mRNAs are cleaved after 10-13 nucleotides by PA. In turn, these short capped RNAs are used as primers by PB1 for transcription of viral mRNAs. During virus replication, PB1 initiates RNA synthesis and copy vRNA into complementary RNA (cRNA) which in turn serves as a template for the production of more vRNAs. This Influenza A virus (strain A/Chicken/Shantou/4231/2003 H5N1 genotype V) protein is RNA-directed RNA polymerase catalytic subunit.